A 447-amino-acid polypeptide reads, in one-letter code: Phosphoglucosamine mutase (447 aa).

The active-site Phosphoserine intermediate is Ser101. Mg(2+) is bound by residues Ser101, Asp242, Asp244, and Asp246. Ser101 carries the phosphoserine modification.

It belongs to the phosphohexose mutase family. Requires Mg(2+) as cofactor. In terms of processing, activated by phosphorylation.

The enzyme catalyses alpha-D-glucosamine 1-phosphate = D-glucosamine 6-phosphate. Its function is as follows. Catalyzes the conversion of glucosamine-6-phosphate to glucosamine-1-phosphate. This Xanthobacter autotrophicus (strain ATCC BAA-1158 / Py2) protein is Phosphoglucosamine mutase.